We begin with the raw amino-acid sequence, 120 residues long: Chaperonin GroEL (120 aa).

Asp23–Thr27 is a binding site for ATP.

It belongs to the chaperonin (HSP60) family. Forms a cylinder of 14 subunits composed of two heptameric rings stacked back-to-back. Interacts with the co-chaperonin GroES.

It is found in the cytoplasm. The catalysed reaction is ATP + H2O + a folded polypeptide = ADP + phosphate + an unfolded polypeptide.. Together with its co-chaperonin GroES, plays an essential role in assisting protein folding. The GroEL-GroES system forms a nano-cage that allows encapsulation of the non-native substrate proteins and provides a physical environment optimized to promote and accelerate protein folding. This chain is Chaperonin GroEL, found in Mycobacterium scrofulaceum.